Reading from the N-terminus, the 84-residue chain is Acetylcholine receptor subunit alpha (84 aa).

Disulfide bonds link C7–C21 and C71–C72. N-linked (GlcNAc...) asparagine glycosylation is present at N20.

It belongs to the ligand-gated ion channel (TC 1.A.9) family. Acetylcholine receptor (TC 1.A.9.1) subfamily. Alpha-1/CHRNA1 sub-subfamily. One of the alpha chains that assemble within the acetylcholine receptor, a pentamer of two alpha chains, a beta, a delta, and a gamma (in immature muscle) or epsilon (in mature muscle) chains. The muscle heteropentamer composed of alpha-1, beta-1, delta, epsilon subunits interacts with the alpha-conotoxin ImII.

The protein resides in the postsynaptic cell membrane. The protein localises to the cell membrane. It catalyses the reaction K(+)(in) = K(+)(out). The catalysed reaction is Na(+)(in) = Na(+)(out). Functionally, upon acetylcholine binding, the AChR responds by an extensive change in conformation that affects all subunits and leads to opening of an ion-conducting channel across the plasma membrane. In Crocidura russula (Greater white-toothed shrew), this protein is Acetylcholine receptor subunit alpha (CHRNA1).